Reading from the N-terminus, the 38-residue chain is Large ribosomal subunit protein bL36 (38 aa).

Belongs to the bacterial ribosomal protein bL36 family.

This Enterococcus faecalis (strain ATCC 700802 / V583) protein is Large ribosomal subunit protein bL36.